Here is a 497-residue protein sequence, read N- to C-terminus: Meiosis-specific serine/threonine-protein kinase MEK1 (497 aa).

Residues 47-102 enclose the FHA domain; the sequence is VKVGRNDKECQLVLTNPSISSVHCVFWCVFFDEDSIPMFYVKDCSLNGTYLNGLLL. Residues 162-444 enclose the Protein kinase domain; the sequence is EITNRIVGNG…SKQGLKHIWI (283 aa). Residues 168–176 and Lys-199 each bind ATP; that span reads VGNGTFGHV. The active-site Proton acceptor is the Asp-290.

The protein belongs to the protein kinase superfamily. CAMK Ser/Thr protein kinase family. CHEK2 subfamily.

The enzyme catalyses L-seryl-[protein] + ATP = O-phospho-L-seryl-[protein] + ADP + H(+). The catalysed reaction is L-threonyl-[protein] + ATP = O-phospho-L-threonyl-[protein] + ADP + H(+). In terms of biological role, probable protein kinase required for meiotic recombination. The polypeptide is Meiosis-specific serine/threonine-protein kinase MEK1 (MEK1) (Saccharomyces cerevisiae (strain ATCC 204508 / S288c) (Baker's yeast)).